The sequence spans 55 residues: Large ribosomal subunit protein bL33 (55 aa).

The protein belongs to the bacterial ribosomal protein bL33 family.

The sequence is that of Large ribosomal subunit protein bL33 from Methylorubrum extorquens (strain CM4 / NCIMB 13688) (Methylobacterium extorquens).